A 205-amino-acid polypeptide reads, in one-letter code: Small ribosomal subunit protein uS4 (205 aa).

The tract at residues 21–47 (GRPKSPFNKRDYGPGQHGQGRKGKPSD) is disordered. In terms of domain architecture, S4 RNA-binding spans 94-154 (RRLDSVVYRA…DKSKQLAIID (61 aa)).

Belongs to the universal ribosomal protein uS4 family. As to quaternary structure, part of the 30S ribosomal subunit. Contacts protein S5. The interaction surface between S4 and S5 is involved in control of translational fidelity.

Its function is as follows. One of the primary rRNA binding proteins, it binds directly to 16S rRNA where it nucleates assembly of the body of the 30S subunit. With S5 and S12 plays an important role in translational accuracy. The chain is Small ribosomal subunit protein uS4 from Pelagibacter ubique (strain HTCC1062).